A 595-amino-acid chain; its full sequence is Glutamyl-tRNA(Gln) amidotransferase subunit B, mitochondrial (595 aa).

The transit peptide at 1 to 72 directs the protein to the mitochondrion; that stretch reads MPRLWYSRYL…RAKSQSRNGR (72 aa).

The protein belongs to the GatB/GatE family. GatB subfamily. Subunit of the heterotrimeric GatCAB amidotransferase (AdT) complex, composed of A, B and C subunits.

The protein localises to the mitochondrion. The catalysed reaction is L-glutamyl-tRNA(Gln) + L-glutamine + ATP + H2O = L-glutaminyl-tRNA(Gln) + L-glutamate + ADP + phosphate + H(+). In terms of biological role, allows the formation of correctly charged Gln-tRNA(Gln) through the transamidation of misacylated Glu-tRNA(Gln) in the mitochondria. The reaction takes place in the presence of glutamine and ATP through an activated gamma-phospho-Glu-tRNA(Gln). The polypeptide is Glutamyl-tRNA(Gln) amidotransferase subunit B, mitochondrial (Talaromyces marneffei (strain ATCC 18224 / CBS 334.59 / QM 7333) (Penicillium marneffei)).